The primary structure comprises 398 residues: Elongation factor Tu (398 aa).

A tr-type G domain is found at 10–207 (KPHVNIGTIG…TVDSYIPEPE (198 aa)). The interval 19–26 (GHVDHGKT) is G1. 19-26 (GHVDHGKT) serves as a coordination point for GTP. T26 contributes to the Mg(2+) binding site. Residues 63–67 (GITIN) form a G2 region. Residues 84 to 87 (DAPG) are G3. GTP is bound by residues 84–88 (DAPGH) and 139–142 (NKVD). Residues 139-142 (NKVD) form a G4 region. The G5 stretch occupies residues 177-179 (SAL).

This sequence belongs to the TRAFAC class translation factor GTPase superfamily. Classic translation factor GTPase family. EF-Tu/EF-1A subfamily. Monomer.

It localises to the cytoplasm. It carries out the reaction GTP + H2O = GDP + phosphate + H(+). Its function is as follows. GTP hydrolase that promotes the GTP-dependent binding of aminoacyl-tRNA to the A-site of ribosomes during protein biosynthesis. In Streptococcus pyogenes serotype M1, this protein is Elongation factor Tu.